A 510-amino-acid chain; its full sequence is Photosystem II CP47 reaction center protein (510 aa).

Residues 2-16 (GLPWYRVHTVLINDP) are Cytoplasmic-facing. A helical membrane pass occupies residues 17 to 37 (GRLIAAHLMHTALVAGWAGSM). The Lumenal portion of the chain corresponds to 38-94 (ALYELATFDPSDPVLNPMWRQGMFVLPFMARLGVTGSWSGWSITGETGIDPGFWSFE). Residues 95–116 (GVALAHIVLSGLLFLAACWHWV) traverse the membrane as a helical segment. Residues 117–134 (YWDLELFRDPRTGEPALD) lie on the Cytoplasmic side of the membrane. The chain crosses the membrane as a helical span at residues 135–157 (LPKMFGIHLFLAGLLCFGFGAFH). Residues 158–196 (LTGLFGPGMWVSDPYGLTGSVQPVAPEWGPDGFNPYNPG) are Lumenal-facing. A helical membrane pass occupies residues 197-218 (GVVAHHIAAGIVGIIAGLFHIL). The Cytoplasmic segment spans residues 219-233 (VRPPQRLYKALRMGN). The chain crosses the membrane as a helical span at residues 234 to 254 (IETVLSSSIAAVFFAAFVVAG). Over 255 to 450 (TMWYGSATTP…GIFRTSPRGW (196 aa)) the chain is Lumenal. Residues 451–473 (FTFAHAVFALLFFFGHIWHGART) form a helical membrane-spanning segment. Residues 474 to 510 (LFRDVFSGIDPELSPEQVEWGFYQKVGDVTTRRKEAV) are Cytoplasmic-facing.

In terms of assembly, PSII is composed of 1 copy each of membrane proteins PsbA, PsbB, PsbC, PsbD, PsbE, PsbF, PsbH, PsbI, PsbJ, PsbK, PsbL, PsbM, PsbT, PsbX, PsbY, PsbZ, Psb30/Ycf12, peripheral proteins PsbO, CyanoQ (PsbQ), PsbU, PsbV and a large number of cofactors. It forms dimeric complexes. Part of a photosystem II (PSII) assembly intermediate complex PSII-I; crystallized from a strain deleted of psbJ, it forms monomeric PSII before addition of the oxygen evolving complex. PSII-I includes 3 assembly factors not found in mature PSII (Psb27, Psb28 and Psb34). Binds multiple chlorophylls. PSII binds additional chlorophylls, carotenoids and specific lipids. serves as cofactor.

Its subcellular location is the cellular thylakoid membrane. Functionally, one of the components of the core complex of photosystem II (PSII). It binds chlorophyll and helps catalyze the primary light-induced photochemical processes of PSII. PSII is a light-driven water:plastoquinone oxidoreductase, using light energy to abstract electrons from H(2)O, generating O(2) and a proton gradient subsequently used for ATP formation. In Thermosynechococcus vestitus (strain NIES-2133 / IAM M-273 / BP-1), this protein is Photosystem II CP47 reaction center protein.